The primary structure comprises 362 residues: Homoisocitrate dehydrogenase (362 aa).

NADH is bound at residue 79–81 (VQS). A (2R,3S)-homoisocitrate-binding site is contributed by Ser81. A phosphoserine mark is found at Ser81 and Ser91. Residues Arg97, Arg107, Arg126, Tyr133, Lys196, and Asn198 each coordinate (2R,3S)-homoisocitrate. Asn198 serves as a coordination point for NADH. Residues Asp232, Asp256, and Asp260 each coordinate Mg(2+). Residues 289–293 (GSAPD) and Asn301 each bind NADH.

This sequence belongs to the isocitrate and isopropylmalate dehydrogenases family. Mg(2+) serves as cofactor.

The protein localises to the cytoplasm. It catalyses the reaction (2R,3S)-homoisocitrate + NAD(+) = 2-oxoadipate + CO2 + NADH. It participates in amino-acid biosynthesis; L-lysine biosynthesis via AAA pathway; L-alpha-aminoadipate from 2-oxoglutarate: step 4/5. This Schizosaccharomyces pombe (strain 972 / ATCC 24843) (Fission yeast) protein is Homoisocitrate dehydrogenase (lys12).